A 312-amino-acid chain; its full sequence is Dihydroorotate dehydrogenase B (NAD(+)), catalytic subunit (312 aa).

FMN is bound by residues serine 23 and 47-48; that span reads KA. Substrate contacts are provided by residues lysine 47 and 71 to 75; that span reads NAIGL. Asparagine 103 and asparagine 131 together coordinate FMN. Asparagine 131 is a substrate binding site. Cysteine 134 functions as the Nucleophile in the catalytic mechanism. The FMN site is built by lysine 171 and isoleucine 197. Residue 198 to 199 participates in substrate binding; it reads NT. FMN-binding positions include glycine 223, 249–250, and 271–272; these read GG and GT.

The protein belongs to the dihydroorotate dehydrogenase family. Type 1 subfamily. As to quaternary structure, heterotetramer of 2 PyrK and 2 PyrD type B subunits. It depends on FMN as a cofactor.

It localises to the cytoplasm. It catalyses the reaction (S)-dihydroorotate + NAD(+) = orotate + NADH + H(+). Its pathway is pyrimidine metabolism; UMP biosynthesis via de novo pathway; orotate from (S)-dihydroorotate (NAD(+) route): step 1/1. Its function is as follows. Catalyzes the conversion of dihydroorotate to orotate with NAD(+) as electron acceptor. This is Dihydroorotate dehydrogenase B (NAD(+)), catalytic subunit (pyrDB) from Streptococcus pneumoniae (strain ATCC BAA-255 / R6).